The primary structure comprises 460 residues: Signal recognition particle 54 kDa protein (460 aa).

GTP contacts are provided by residues 104–111 (GLQGSGKT), 184–188 (DTAGR), and 242–245 (TKLD).

Belongs to the GTP-binding SRP family. SRP54 subfamily. Part of the signal recognition particle protein translocation system, which is composed of SRP and FtsY. Archaeal SRP consists of a 7S RNA molecule of 300 nucleotides and two protein subunits: SRP54 and SRP19.

It localises to the cytoplasm. It carries out the reaction GTP + H2O = GDP + phosphate + H(+). In terms of biological role, involved in targeting and insertion of nascent membrane proteins into the cytoplasmic membrane. Binds to the hydrophobic signal sequence of the ribosome-nascent chain (RNC) as it emerges from the ribosomes. The SRP-RNC complex is then targeted to the cytoplasmic membrane where it interacts with the SRP receptor FtsY. The polypeptide is Signal recognition particle 54 kDa protein (Halobacterium salinarum (strain ATCC 29341 / DSM 671 / R1)).